The following is a 224-amino-acid chain: PKHD-type hydroxylase Shewana3_0717 (224 aa).

The region spanning 78-176 (QFYPPLFNRY…RTAAFMWLQS (99 aa)) is the Fe2OG dioxygenase domain. Positions 96, 98, and 157 each coordinate Fe cation. Arginine 167 is a 2-oxoglutarate binding site.

Fe(2+) is required as a cofactor. It depends on L-ascorbate as a cofactor.

This chain is PKHD-type hydroxylase Shewana3_0717, found in Shewanella sp. (strain ANA-3).